We begin with the raw amino-acid sequence, 535 residues long: Major glycerophosphoinositol permease GIT3 (535 aa).

A helical transmembrane segment spans residues 49–69 (VVTSVKANSLWPAFASGAGLF). N-linked (GlcNAc...) asparagine glycosylation is present at asparagine 75. 5 consecutive transmembrane segments (helical) span residues 101 to 121 (NIAS…GYIS), 137 to 157 (LIFF…QGFF), 165 to 185 (FFLG…ASEF), 204 to 224 (AMID…IWIF), and 232 to 252 (LWRV…FMRL). An N-linked (GlcNAc...) asparagine glycan is attached at asparagine 256. 6 helical membrane passes run 275–295 (WWLI…IWFI), 324–344 (WGWS…GAIS), 352–372 (LTLA…SACL), 378–398 (HIAG…FGPG), 419–439 (GIAA…FPAI), and 455–475 (VPFY…IFFC). N-linked (GlcNAc...) asparagine glycosylation occurs at asparagine 532.

Belongs to the major facilitator superfamily. Sugar transporter (TC 2.A.1.1) family.

It is found in the cell membrane. The enzyme catalyses sn-glycerol 3-phosphocholine(out) = sn-glycerol 3-phosphocholine(in). In terms of biological role, glycerophosphodiester transporter that mediates uptake of glycerophosphocholine (GroPCho) with GIT4. GIT3 acts as the major GroPCho permease. Does not possess detectable glycerophosphoinositol (GroPIns) transport activity. The expanded ability to utilize GroPIns and GroPCho results from the organism's pathogenic nature and its need to occupy a variety of environments within its host organism. This possibility is buttressed by the fact that GroPIns and GroPCho are present and abundant in human fluids. In Candida albicans (strain SC5314 / ATCC MYA-2876) (Yeast), this protein is Major glycerophosphoinositol permease GIT3.